Reading from the N-terminus, the 618-residue chain is Pyranose 2-oxidase (618 aa).

Tele-8alpha-FAD histidine is present on His170. Residues Gln441 and His443 each coordinate substrate. Catalysis depends on His540, which acts as the Proton acceptor. Residue Asn583 is part of the active site.

It belongs to the GMC oxidoreductase family. Homotetramer. Requires FAD as cofactor.

The enzyme catalyses D-glucose + O2 = 2-dehydro-D-glucose + H2O2. Catalyzes the oxidation of various aldopyranoses and disaccharides on carbon-2 to the corresponding 2-keto sugars concomitant with the reduction of O(2) to H(2)O(2). This is Pyranose 2-oxidase (p2ox) from Lyophyllum shimeji (Hon-shimeji).